The sequence spans 197 residues: Ribosomal RNA large subunit methyltransferase E (197 aa).

S-adenosyl-L-methionine contacts are provided by glycine 52, tryptophan 54, aspartate 72, aspartate 88, and aspartate 112. Lysine 152 functions as the Proton acceptor in the catalytic mechanism.

It belongs to the class I-like SAM-binding methyltransferase superfamily. RNA methyltransferase RlmE family.

It is found in the cytoplasm. It catalyses the reaction uridine(2552) in 23S rRNA + S-adenosyl-L-methionine = 2'-O-methyluridine(2552) in 23S rRNA + S-adenosyl-L-homocysteine + H(+). Specifically methylates the uridine in position 2552 of 23S rRNA at the 2'-O position of the ribose in the fully assembled 50S ribosomal subunit. In Nitrosopumilus maritimus (strain SCM1), this protein is Ribosomal RNA large subunit methyltransferase E.